A 423-amino-acid polypeptide reads, in one-letter code: 26S proteasome regulatory subunit 6B homolog (423 aa).

207 to 214 (GPPGTGKT) is a binding site for ATP.

This sequence belongs to the AAA ATPase family.

It localises to the cytoplasm. It is found in the nucleus. Functionally, the 26S proteasome is involved in the ATP-dependent degradation of ubiquitinated proteins. The regulatory (or ATPase) complex confers ATP dependency and substrate specificity to the 26S complex. This Aspergillus niger protein is 26S proteasome regulatory subunit 6B homolog (tbpA).